Here is a 230-residue protein sequence, read N- to C-terminus: Large ribosomal subunit protein uL1 (230 aa).

It belongs to the universal ribosomal protein uL1 family. Part of the 50S ribosomal subunit.

In terms of biological role, binds directly to 23S rRNA. The L1 stalk is quite mobile in the ribosome, and is involved in E site tRNA release. Protein L1 is also a translational repressor protein, it controls the translation of the L11 operon by binding to its mRNA. This is Large ribosomal subunit protein uL1 from Ruminiclostridium cellulolyticum (strain ATCC 35319 / DSM 5812 / JCM 6584 / H10) (Clostridium cellulolyticum).